A 94-amino-acid chain; its full sequence is Putative pterin-4-alpha-carbinolamine dehydratase (94 aa).

The protein belongs to the pterin-4-alpha-carbinolamine dehydratase family.

It catalyses the reaction (4aS,6R)-4a-hydroxy-L-erythro-5,6,7,8-tetrahydrobiopterin = (6R)-L-erythro-6,7-dihydrobiopterin + H2O. In Mycobacterium sp. (strain JLS), this protein is Putative pterin-4-alpha-carbinolamine dehydratase.